The chain runs to 688 residues: Complement C1s-1 subcomponent (688 aa).

Residues 1-15 (MWYLVLFSLLASFSA) form the signal peptide. The 115-residue stretch at 16 to 130 (EPTMHGEILS…TGFAAYYTAI (115 aa)) folds into the CUB 1 domain. Positions 60, 68, 113, 131, 132, and 134 each coordinate Ca(2+). An intrachain disulfide couples Cys65 to Cys83. One can recognise an EGF-like; calcium-binding domain in the interval 131–172 (DVNECTDFTDVPCSHFCNNFIGGYFCSCPPEYFLHDDMRNCG). Disulfide bonds link Cys135/Cys147, Cys143/Cys156, and Cys158/Cys171. Positions 149, 150, and 153 each coordinate Ca(2+). The residue at position 149 (Asn149) is a (3R)-3-hydroxyasparagine. Asn174 carries N-linked (GlcNAc...) asparagine glycosylation. A disulfide bridge links Cys175 with Cys202. Residues 175–290 (CSGDVFTALI…KGWKLRYHGD (116 aa)) enclose the CUB 2 domain. Residues Glu226, Asp236, Asp275, Gly278, and Gln279 each coordinate Ca(2+). Cys234 and Cys251 form a disulfide bridge. 2 Sushi domains span residues 292-356 (ISCP…KCQP) and 357-423 (VYCG…RCIP). Disulfide bonds link Cys294–Cys341, Cys321–Cys354, Cys359–Cys403, Cys386–Cys421, Cys425–Cys549, Cys595–Cys618, and Cys627–Cys659. The Peptidase S1 domain maps to 438 to 680 (IFGGQPAKIE…YVDWILKTMQ (243 aa)). Active-site charge relay system residues include His475 and Asp529. Ser631 (charge relay system) is an active-site residue.

Belongs to the peptidase S1 family. In terms of assembly, core component of the complement C1 complex, a calcium-dependent complex composed of 1 molecule of the C1Q subcomplex, 2 molecules of C1R and 2 molecules of C1S. The C1Q subcomplex is composed 18 subunits: 3 chains of C1QA, C1QB, and C1QC trimerize to form 6 collagen-like triple helices connected to six globular ligand-recognition modules. In terms of processing, cleaved and activated by C1R to generate Complement C1s subcomponent heavy and light chains. The iron and 2-oxoglutarate dependent 3-hydroxylation of aspartate and asparagine is (R) stereospecific within EGF domains. As to expression, specifically expressed in male reproductive tissues.

It is found in the secreted. Its subcellular location is the cell surface. It catalyses the reaction Cleavage of Arg-|-Ala bond in complement component C4 to form C4a and C4b, and Lys(or Arg)-|-Lys bond in complement component C2 to form C2a and C2b: the 'classical' pathway C3 convertase.. Cleaved and activated by C1R. Immunoglobulin-binding promotes autoactivation of C1R, which results in the cleavage of the Arg-Ile bond in the catalytic domain. Inhibited by C1 inhibitor (SERPING1). Its function is as follows. Component of the complement C1 complex, a multiprotein complex that initiates the classical pathway of the complement system, a cascade of proteins that leads to phagocytosis and breakdown of pathogens and signaling that strengthens the adaptive immune system. C1S is activated following association of the C1 complex with immunoglobulins (IgG or IgM) complexed with antigens to form antigen-antibody complexes on the surface of pathogens. C1S is cleaved and activated by C1R to generate C1s subcomponent heavy and light chains. C1s subcomponent light chain then cleaves and activates C2 and C4, the next components of the classical complement pathway. Serine protease component of the complement C1 complex, which catalyzes cleavage and activation of C2 and C4, the next components of the classical complement pathway. Also cleaves IGFBP5 and thereby inhibits the trophic effects of IGF1. This is Complement C1s-1 subcomponent from Mus musculus (Mouse).